The sequence spans 83 residues: uncharacterized protein (83 aa).

This is an uncharacterized protein from Treponema pallidum (strain Nichols).